The sequence spans 267 residues: MKIALKIAYLGDRYYGFQRQPGLRTVESVMRDALLRIGVANGDFCYAGRTDRGVSALGQVIDFWIEEDRAYLAFPRVINSLLPSDVWAWARAVAPVGFSARWSALWREYRYFLFSPDIDLSAVREAAGHLVGTHDFRNFSMSKVDTVRRIISIDVNAHCGIVVFDVRAEGFIWNMVRRIVGALELIGIGEKPVDWILELLDPSTPHGAPTAPPEGLMLMDVGYSDLEWEEDRYTKQRVSRMLISEARRRAAMSGVIQEMLRRMRDTF.

The active-site Nucleophile is Asp51. Position 109 (Tyr109) interacts with substrate.

It belongs to the tRNA pseudouridine synthase TruA family.

It carries out the reaction uridine(38/39/40) in tRNA = pseudouridine(38/39/40) in tRNA. Functionally, formation of pseudouridine at positions 38, 39 and 40 in the anticodon stem and loop of transfer RNAs. The protein is tRNA pseudouridine synthase A of Methanothrix thermoacetophila (strain DSM 6194 / JCM 14653 / NBRC 101360 / PT) (Methanosaeta thermophila).